The sequence spans 123 residues: Small ribosomal subunit protein uS8 (123 aa).

This sequence belongs to the universal ribosomal protein uS8 family. Part of the 30S ribosomal subunit. Contacts proteins S5 and S12.

One of the primary rRNA binding proteins, it binds directly to 16S rRNA central domain where it helps coordinate assembly of the platform of the 30S subunit. The sequence is that of Small ribosomal subunit protein uS8 (rpsH) from Carsonella ruddii (strain PV).